Here is a 201-residue protein sequence, read N- to C-terminus: MPTAVTGPEIERLIQLLARLPGLGPRSARRAALHLIKKREALMAPLASALQVAIDRIRVCETCGNIDTRSPCTICTDARRDPSIIVVVADVADLWALERAGATNGFYHVLGATLSPLDGVGPQDLTIDALVARAHDPRVAEIVLALNATVDGQTTAHYITDLLGEANVKVTRLAHGVPVGGELDYLDEGTLSAAMRQRTLF.

The C4-type zinc finger occupies Cys-60–Cys-75. A Toprim domain is found at Ser-83–Pro-178.

Belongs to the RecR family.

May play a role in DNA repair. It seems to be involved in an RecBC-independent recombinational process of DNA repair. It may act with RecF and RecO. The sequence is that of Recombination protein RecR from Nitrobacter winogradskyi (strain ATCC 25391 / DSM 10237 / CIP 104748 / NCIMB 11846 / Nb-255).